Reading from the N-terminus, the 515-residue chain is tRNA-2-methylthio-N(6)-dimethylallyladenosine synthase (515 aa).

In terms of domain architecture, MTTase N-terminal spans 25 to 140; sequence KTYQVRTFGC…LPALLNRARH (116 aa). Residues Cys34, Cys69, Cys103, Cys177, Cys181, and Cys184 each contribute to the [4Fe-4S] cluster site. The region spanning 163-393 is the Radical SAM core domain; sequence RDSVYAGWVS…TALQDRIAAE (231 aa). One can recognise a TRAM domain in the interval 396–466; it reads AKQLGRKVEV…AFHLVADPAG (71 aa). The disordered stretch occupies residues 482-515; that stretch reads DRSQADSCGVPAAGAASGKAGVSLGMPSLPTRRA. Residues 490 to 506 are compositionally biased toward low complexity; it reads GVPAAGAASGKAGVSLG.

This sequence belongs to the methylthiotransferase family. MiaB subfamily. In terms of assembly, monomer. It depends on [4Fe-4S] cluster as a cofactor.

The protein localises to the cytoplasm. It carries out the reaction N(6)-dimethylallyladenosine(37) in tRNA + (sulfur carrier)-SH + AH2 + 2 S-adenosyl-L-methionine = 2-methylsulfanyl-N(6)-dimethylallyladenosine(37) in tRNA + (sulfur carrier)-H + 5'-deoxyadenosine + L-methionine + A + S-adenosyl-L-homocysteine + 2 H(+). In terms of biological role, catalyzes the methylthiolation of N6-(dimethylallyl)adenosine (i(6)A), leading to the formation of 2-methylthio-N6-(dimethylallyl)adenosine (ms(2)i(6)A) at position 37 in tRNAs that read codons beginning with uridine. The sequence is that of tRNA-2-methylthio-N(6)-dimethylallyladenosine synthase from Paenarthrobacter aurescens (strain TC1).